A 634-amino-acid chain; its full sequence is Probable threonine--tRNA ligase, cytoplasmic (634 aa).

In terms of domain architecture, TGS spans 1-61 (MSIYVTFKGQ…NENQKIELYD (61 aa)).

It belongs to the class-II aminoacyl-tRNA synthetase family.

Its subcellular location is the cytoplasm. It catalyses the reaction tRNA(Thr) + L-threonine + ATP = L-threonyl-tRNA(Thr) + AMP + diphosphate + H(+). This Enterocytozoon bieneusi (strain H348) (Microsporidian parasite) protein is Probable threonine--tRNA ligase, cytoplasmic.